We begin with the raw amino-acid sequence, 229 residues long: Wtf element wtf14 (229 aa).

The span at 1–26 (MENNHHLAKDSLDELNPKRGKGEHET) shows a compositional bias: basic and acidic residues. The disordered stretch occupies residues 1–27 (MENNHHLAKDSLDELNPKRGKGEHETQ). The next 4 membrane-spanning stretches (helical) occupy residues 71–91 (IPAV…YLVF), 100–120 (VLFG…LLAT), 151–171 (LYAI…LMFF), and 188–208 (VIGV…PGLF).

This sequence belongs to the WTF family.

The protein resides in the endoplasmic reticulum membrane. Functionally, may act in meiotic drive. The sequence is that of Wtf element wtf14 from Schizosaccharomyces pombe (strain 972 / ATCC 24843) (Fission yeast).